A 117-amino-acid polypeptide reads, in one-letter code: Huntingtin-interacting protein M (117 aa).

2 disordered regions span residues 1–30 (MSEK…VPRS) and 71–117 (EASN…RKND). Positions 72 to 81 (ASNNGSMRNT) are enriched in polar residues. Residues 82-117 (SQDREREVDNNREPHSAESDVTRFLFDEMPKSRKND) are compositionally biased toward basic and acidic residues.

May interact with the N-terminus of HD.

This is Huntingtin-interacting protein M from Homo sapiens (Human).